The sequence spans 1533 residues: Glycogen debranching enzyme (1533 aa).

Phosphoserine is present on S64. Residues D527, H530, and D628 contribute to the active site.

This sequence belongs to the glycogen debranching enzyme family. Monomer. Interacts with NHLRC1/malin. Post-translationally, ubiquitinated.

It localises to the cytoplasm. It carries out the reaction Transfers a segment of a (1-&gt;4)-alpha-D-glucan to a new position in an acceptor, which may be glucose or a (1-&gt;4)-alpha-D-glucan.. It catalyses the reaction Hydrolysis of (1-&gt;6)-alpha-D-glucosidic branch linkages in glycogen phosphorylase limit dextrin.. Functionally, multifunctional enzyme acting as 1,4-alpha-D-glucan:1,4-alpha-D-glucan 4-alpha-D-glycosyltransferase and amylo-1,6-glucosidase in glycogen degradation. This chain is Glycogen debranching enzyme (AGL), found in Canis lupus familiaris (Dog).